We begin with the raw amino-acid sequence, 387 residues long: Chorismate synthase (387 aa).

2 residues coordinate NADP(+): R40 and R46. FMN contacts are provided by residues 129–131 (RSS), 250–251 (QA), G295, 310–314 (KPIPT), and R336.

This sequence belongs to the chorismate synthase family. Homotetramer. The cofactor is FMNH2.

It carries out the reaction 5-O-(1-carboxyvinyl)-3-phosphoshikimate = chorismate + phosphate. It participates in metabolic intermediate biosynthesis; chorismate biosynthesis; chorismate from D-erythrose 4-phosphate and phosphoenolpyruvate: step 7/7. Catalyzes the anti-1,4-elimination of the C-3 phosphate and the C-6 proR hydrogen from 5-enolpyruvylshikimate-3-phosphate (EPSP) to yield chorismate, which is the branch point compound that serves as the starting substrate for the three terminal pathways of aromatic amino acid biosynthesis. This reaction introduces a second double bond into the aromatic ring system. The polypeptide is Chorismate synthase (Desulforamulus reducens (strain ATCC BAA-1160 / DSM 100696 / MI-1) (Desulfotomaculum reducens)).